A 459-amino-acid polypeptide reads, in one-letter code: Putrescine aminotransferase (459 aa).

Residues 150 to 151 (GT) and glutamine 274 contribute to the pyridoxal 5'-phosphate site. Lysine 300 carries the N6-(pyridoxal phosphate)lysine modification. Threonine 332 serves as a coordination point for pyridoxal 5'-phosphate.

Belongs to the class-III pyridoxal-phosphate-dependent aminotransferase family. Putrescine aminotransferase subfamily. Pyridoxal 5'-phosphate serves as cofactor.

It carries out the reaction an alkane-alpha,omega-diamine + 2-oxoglutarate = an omega-aminoaldehyde + L-glutamate. It catalyses the reaction putrescine + 2-oxoglutarate = 1-pyrroline + L-glutamate + H2O. The enzyme catalyses cadaverine + 2-oxoglutarate = 5-aminopentanal + L-glutamate. Its pathway is amine and polyamine degradation; putrescine degradation; 4-aminobutanal from putrescine (transaminase route): step 1/1. In terms of biological role, catalyzes the aminotransferase reaction from putrescine to 2-oxoglutarate, leading to glutamate and 4-aminobutanal, which spontaneously cyclizes to form 1-pyrroline. This is the first step in one of two pathways for putrescine degradation, where putrescine is converted into 4-aminobutanoate (gamma-aminobutyrate or GABA) via 4-aminobutanal. Also functions as a cadaverine transaminase in a a L-lysine degradation pathway to succinate that proceeds via cadaverine, glutarate and L-2-hydroxyglutarate. The polypeptide is Putrescine aminotransferase (Salmonella paratyphi B (strain ATCC BAA-1250 / SPB7)).